Here is a 79-residue protein sequence, read N- to C-terminus: Small ribosomal subunit protein bS18B (79 aa).

It belongs to the bacterial ribosomal protein bS18 family. Part of the 30S ribosomal subunit. Forms a tight heterodimer with protein bS6.

In terms of biological role, binds as a heterodimer with protein bS6 to the central domain of the 16S rRNA, where it helps stabilize the platform of the 30S subunit. The sequence is that of Small ribosomal subunit protein bS18B from Mycolicibacterium gilvum (strain PYR-GCK) (Mycobacterium gilvum (strain PYR-GCK)).